Here is a 31-residue protein sequence, read N- to C-terminus: Cyclotide Hyfl-A (31 aa).

The segment at residues 1–31 (SISCGESCVYIPCTVTALVGCTCKDKVCYLN) is a cross-link (cyclopeptide (Ser-Asn)). Disulfide bonds link C4-C21, C8-C23, and C13-C28.

The protein belongs to the cyclotide family. Bracelet subfamily. In terms of processing, this is a cyclic peptide.

Its function is as follows. Probably participates in a plant defense mechanism. The protein is Cyclotide Hyfl-A of Hybanthus floribundus (Greenviolet).